The chain runs to 118 residues: Small ribosomal subunit protein uS13 (118 aa).

The segment at 94-118 (GLPVRGQRTKTNARTRKGPRKPIKK) is disordered.

This sequence belongs to the universal ribosomal protein uS13 family. In terms of assembly, part of the 30S ribosomal subunit. Forms a loose heterodimer with protein S19. Forms two bridges to the 50S subunit in the 70S ribosome.

Its function is as follows. Located at the top of the head of the 30S subunit, it contacts several helices of the 16S rRNA. In the 70S ribosome it contacts the 23S rRNA (bridge B1a) and protein L5 of the 50S subunit (bridge B1b), connecting the 2 subunits; these bridges are implicated in subunit movement. Contacts the tRNAs in the A and P-sites. The polypeptide is Small ribosomal subunit protein uS13 (Shigella dysenteriae serotype 1 (strain Sd197)).